An 834-amino-acid chain; its full sequence is MKLSRREFAKANAAAIAAAAAGLPLASTASNLITEADMTRLDWNKAPCRFCGTGCSVMVATRDNRVVATHGDVKAEVNRGLNCVKGYFLSKIMYGVDRLTQPLLRMKNGVYDKQGEFQPVSWDQAFDIMAQKIKQAIAEQGPEAVGMFGSGQWTVWEGYAANKLMKAGFRSNNIDPNARHCMASAVMGFMRTFGMDEPMGCYDDIEAADAFVLWGSNMAEMHPILWSRVTDRRLSHPNTRVAVLSTFEHRSFDLADIPLVFKPQTDLLILNYIANHIIESGAVNKDFVGKHTKFARGADDIGYGLRADNPLEMQAKNAAKANTWEDMSFEQFAAFVKPYTLERTAKESGVAAERLKALAKLYADPKRKVMSFWTMGFNQHTRGVWANNLIYNLHLLTGKISEPGNSPFSLTGQPSACGTAREVGTFSHRLPADMLVANPKHRETAEKIWKLPPGTIQEKPGFHAVEQSRKLKDGVLKVYWTQVSNNMQAGPNVMQEILPGWRNPQAFVIVSDVYPTVSAQAADLILPSAMWVEKEGAYGNAERRTQFWHQLVKAPGEAKSDLWQLVEFSKRFTTDEVWPAELLAKAPDYKGKTLYQVLFANGQVDQFPSEQIEAGYANDEAEAFGFYLQKGLFEEYARFGRGHAHDLAPFDSYHAERGLRWPVVDGKETRWRYREGHDPYVEKGSGVQFYGYPDKRALIFALPYEPPAEAPDDEFPFWLSTGRVLEHWHTGSMTQRVEELHGAVPDALVYMHPDDAKALKARRGSEVKVISRRGEIRARIETRGRNKPPRGLVFVPFFDANKLINKVTLDATDPISKQTDYKKCAVKIELVSLA.

The tat-type signal signal peptide spans M1–A29. The 4Fe-4S Mo/W bis-MGD-type domain maps to L41–D97. Residues C48, C51, C55, and C83 each contribute to the [4Fe-4S] cluster site. Mo-bis(molybdopterin guanine dinucleotide)-binding positions include K85, Q152, N177, C181, W214–M221, S245–H249, Q264–D266, M375, Q379, N485, S511–D512, K534, D561, and T721–T730. Residue F797 participates in substrate binding. 2 residues coordinate Mo-bis(molybdopterin guanine dinucleotide): N805 and K822.

Belongs to the prokaryotic molybdopterin-containing oxidoreductase family. NasA/NapA/NarB subfamily. In terms of assembly, component of the periplasmic nitrate reductase NapAB complex composed of NapA and NapB. [4Fe-4S] cluster is required as a cofactor. The cofactor is Mo-bis(molybdopterin guanine dinucleotide). Predicted to be exported by the Tat system. The position of the signal peptide cleavage has not been experimentally proven.

The protein resides in the periplasm. The catalysed reaction is 2 Fe(II)-[cytochrome] + nitrate + 2 H(+) = 2 Fe(III)-[cytochrome] + nitrite + H2O. Functionally, catalytic subunit of the periplasmic nitrate reductase complex NapAB. Receives electrons from NapB and catalyzes the reduction of nitrate to nitrite. The protein is Periplasmic nitrate reductase of Ectopseudomonas mendocina (strain ymp) (Pseudomonas mendocina).